Here is a 239-residue protein sequence, read N- to C-terminus: Dolichyldiphosphatase (239 aa).

At 1-34 the chain is on the lumenal side; the sequence is MNSTAAAINPNPNVIPFDDTYILYDSHDFLSFLS. A helical membrane pass occupies residues 35-55; it reads AYFSLMPILVLAFYLSWFIIT. The Cytoplasmic portion of the chain corresponds to 56–131; it reads RELEACIVAF…KIYTSWKNLN (76 aa). The chain crosses the membrane as a helical span at residues 132-152; sequence FLEKCIFSGALALLSFCVCFS. Residues 153–164 are Lumenal-facing; that stretch reads RVYLHYHNLDQV. Residues 165–185 form a helical membrane-spanning segment; it reads IVGFSVGALTGSLYFFIVGII. Residues 186–239 lie on the Cytoplasmic side of the membrane; that stretch reads RELGLINWFLKLRIVRLFYMTDSYNLAPLTLKENYEAYWKRINQRSFNDKSKRD.

It belongs to the dolichyldiphosphatase family.

It localises to the endoplasmic reticulum membrane. It carries out the reaction a di-trans,poly-cis-dolichyl diphosphate + H2O = a di-trans,poly-cis-dolichyl phosphate + phosphate + H(+). It functions in the pathway protein modification; protein glycosylation. Its function is as follows. Non-essential protein which is required for efficient N-glycosylation. Necessary for maintaining optimal levels of dolichol-linked oligosaccharides. Hydrolyzes dolichyl pyrophosphate at a very high rate and dolichyl monophosphate at a much lower rate. Does not act on phosphatidate. This is Dolichyldiphosphatase (CAX4) from Saccharomyces cerevisiae (strain ATCC 204508 / S288c) (Baker's yeast).